The following is a 378-amino-acid chain: UDP-N-acetylglucosamine--N-acetylmuramyl-(pentapeptide) pyrophosphoryl-undecaprenol N-acetylglucosamine transferase (378 aa).

UDP-N-acetyl-alpha-D-glucosamine-binding positions include T14–G16, N125, R165, S193, and Q293.

Belongs to the glycosyltransferase 28 family. MurG subfamily.

It localises to the cell inner membrane. The enzyme catalyses di-trans,octa-cis-undecaprenyl diphospho-N-acetyl-alpha-D-muramoyl-L-alanyl-D-glutamyl-meso-2,6-diaminopimeloyl-D-alanyl-D-alanine + UDP-N-acetyl-alpha-D-glucosamine = di-trans,octa-cis-undecaprenyl diphospho-[N-acetyl-alpha-D-glucosaminyl-(1-&gt;4)]-N-acetyl-alpha-D-muramoyl-L-alanyl-D-glutamyl-meso-2,6-diaminopimeloyl-D-alanyl-D-alanine + UDP + H(+). The protein operates within cell wall biogenesis; peptidoglycan biosynthesis. Its function is as follows. Cell wall formation. Catalyzes the transfer of a GlcNAc subunit on undecaprenyl-pyrophosphoryl-MurNAc-pentapeptide (lipid intermediate I) to form undecaprenyl-pyrophosphoryl-MurNAc-(pentapeptide)GlcNAc (lipid intermediate II). The polypeptide is UDP-N-acetylglucosamine--N-acetylmuramyl-(pentapeptide) pyrophosphoryl-undecaprenol N-acetylglucosamine transferase (Bartonella quintana (strain Toulouse) (Rochalimaea quintana)).